Here is a 322-residue protein sequence, read N- to C-terminus: Phosphatidylserine decarboxylase proenzyme (322 aa).

Catalysis depends on charge relay system; for autoendoproteolytic cleavage activity residues aspartate 90, histidine 147, and serine 254. The Schiff-base intermediate with substrate; via pyruvic acid; for decarboxylase activity role is filled by serine 254. Residue serine 254 is modified to Pyruvic acid (Ser); by autocatalysis. The tract at residues 294–322 (EVEPVPLPEEEIKAEHDASPLVDDKKDET) is disordered. Residues 303–322 (EEIKAEHDASPLVDDKKDET) are compositionally biased toward basic and acidic residues.

Belongs to the phosphatidylserine decarboxylase family. PSD-B subfamily. Prokaryotic type I sub-subfamily. In terms of assembly, heterodimer of a large membrane-associated beta subunit and a small pyruvoyl-containing alpha subunit. Pyruvate is required as a cofactor. In terms of processing, is synthesized initially as an inactive proenzyme. Formation of the active enzyme involves a self-maturation process in which the active site pyruvoyl group is generated from an internal serine residue via an autocatalytic post-translational modification. Two non-identical subunits are generated from the proenzyme in this reaction, and the pyruvate is formed at the N-terminus of the alpha chain, which is derived from the carboxyl end of the proenzyme. The autoendoproteolytic cleavage occurs by a canonical serine protease mechanism, in which the side chain hydroxyl group of the serine supplies its oxygen atom to form the C-terminus of the beta chain, while the remainder of the serine residue undergoes an oxidative deamination to produce ammonia and the pyruvoyl prosthetic group on the alpha chain. During this reaction, the Ser that is part of the protease active site of the proenzyme becomes the pyruvoyl prosthetic group, which constitutes an essential element of the active site of the mature decarboxylase.

The protein resides in the cell membrane. The catalysed reaction is a 1,2-diacyl-sn-glycero-3-phospho-L-serine + H(+) = a 1,2-diacyl-sn-glycero-3-phosphoethanolamine + CO2. It functions in the pathway phospholipid metabolism; phosphatidylethanolamine biosynthesis; phosphatidylethanolamine from CDP-diacylglycerol: step 2/2. In terms of biological role, catalyzes the formation of phosphatidylethanolamine (PtdEtn) from phosphatidylserine (PtdSer). In Salmonella arizonae (strain ATCC BAA-731 / CDC346-86 / RSK2980), this protein is Phosphatidylserine decarboxylase proenzyme.